An 83-amino-acid polypeptide reads, in one-letter code: Short neurotoxin VAN-10 (83 aa).

Positions 1 to 21 (MKTLLLTLVVVTIVCLDLGYT) are cleaved as a signal peptide. 4 disulfide bridges follow: C24/C45, C38/C62, C64/C75, and C76/C81.

The protein belongs to the three-finger toxin family. Short-chain subfamily. Type I alpha-neurotoxin sub-subfamily. As to expression, expressed by the venom gland.

It is found in the secreted. Functionally, binds to muscle nicotinic acetylcholine receptor (nAChR) and inhibit acetylcholine from binding to the receptor, thereby impairing neuromuscular transmission. The chain is Short neurotoxin VAN-10 from Laticauda laticaudata (Blue-ringed sea krait).